The sequence spans 122 residues: Large ribosomal subunit protein uL14 (122 aa).

This sequence belongs to the universal ribosomal protein uL14 family. Part of the 50S ribosomal subunit. Forms a cluster with proteins L3 and L19. In the 70S ribosome, L14 and L19 interact and together make contacts with the 16S rRNA in bridges B5 and B8.

In terms of biological role, binds to 23S rRNA. Forms part of two intersubunit bridges in the 70S ribosome. The chain is Large ribosomal subunit protein uL14 from Dehalococcoides mccartyi (strain ATCC BAA-2100 / JCM 16839 / KCTC 5957 / BAV1).